The following is a 119-amino-acid chain: MKALSPVRGCYEAVCCLSERSLAIARGRGKGPAAEEPLSLLDDMNHCYSRLRELVPGVPRGTQLSQVEILQRVIDYILDLQVVLAEPAPGPPDGPHLPIQTAELTPELVISNDKRSFCH.

The 53-residue stretch at 28 to 80 (RGKGPAAEEPLSLLDDMNHCYSRLRELVPGVPRGTQLSQVEILQRVIDYILDL) folds into the bHLH domain.

As to quaternary structure, homodimer, and heterodimer with other HLH proteins. Interacts with COPS5 and COPS7A. Interacts with IFI204. Interacts with GATA4 and NKX2-5. Interacts with ANKRD2; both proteins cooperate in myoblast differentiation. Interacts with CLOCK and BMAL1. In terms of tissue distribution, expressed abundantly in lung, kidney and adrenal gland, but not in adult brain.

The protein resides in the nucleus. Its function is as follows. Transcriptional regulator (lacking a basic DNA binding domain) which negatively regulates the basic helix-loop-helix (bHLH) transcription factors by forming heterodimers and inhibiting their DNA binding and transcriptional activity. Implicated in regulating a variety of cellular processes, including cellular growth, senescence, differentiation, apoptosis, angiogenesis, and neoplastic transformation. Involved in myogenesis by inhibiting skeletal muscle and cardiac myocyte differentiation and promoting muscle precursor cells proliferation. Inhibits the binding of E2A-containing protein complexes to muscle creatine kinase E-box enhancer. Regulates the circadian clock by repressing the transcriptional activator activity of the CLOCK-BMAL1 heterodimer. This Homo sapiens (Human) protein is DNA-binding protein inhibitor ID-3 (ID3).